Here is a 206-residue protein sequence, read N- to C-terminus: Guanylate kinase (206 aa).

The Guanylate kinase-like domain occupies 5–183 (FNLLILSGPS…SKEIILSIAK (179 aa)). 12-19 (GPSGAGKS) provides a ligand contact to ATP.

It belongs to the guanylate kinase family.

The protein localises to the cytoplasm. The catalysed reaction is GMP + ATP = GDP + ADP. Essential for recycling GMP and indirectly, cGMP. The polypeptide is Guanylate kinase (gmk) (Helicobacter pylori (strain ATCC 700392 / 26695) (Campylobacter pylori)).